We begin with the raw amino-acid sequence, 746 residues long: NAD(P)H-quinone oxidoreductase subunit 5, chloroplastic (746 aa).

The next 16 membrane-spanning stretches (helical) occupy residues 9–29 (WIIP…LLLF), 40–60 (WTFL…YLSI), 89–109 (IDPL…LVLI), 125–145 (FAYM…SNLI), 147–167 (VYFF…FWFT), 185–205 (GDFG…SFEF), 221–241 (VNLL…IAKS), 258–278 (TPIS…FLVA), 280–300 (LLPL…IGII), 327–347 (LGYM…FHLI), 354–374 (ALLF…VGYS), 396–416 (TAFL…CFWS), 425–445 (LLFS…TAFY), 547–567 (ILFP…IGIP), 608–628 (FSVS…KPFY), and 723–743 (YLFL…FFYF).

The protein belongs to the complex I subunit 5 family. NDH is composed of at least 16 different subunits, 5 of which are encoded in the nucleus.

Its subcellular location is the plastid. The protein localises to the chloroplast thylakoid membrane. It carries out the reaction a plastoquinone + NADH + (n+1) H(+)(in) = a plastoquinol + NAD(+) + n H(+)(out). The catalysed reaction is a plastoquinone + NADPH + (n+1) H(+)(in) = a plastoquinol + NADP(+) + n H(+)(out). Its function is as follows. NDH shuttles electrons from NAD(P)H:plastoquinone, via FMN and iron-sulfur (Fe-S) centers, to quinones in the photosynthetic chain and possibly in a chloroplast respiratory chain. The immediate electron acceptor for the enzyme in this species is believed to be plastoquinone. Couples the redox reaction to proton translocation, and thus conserves the redox energy in a proton gradient. This Lepidium virginicum (Virginia pepperweed) protein is NAD(P)H-quinone oxidoreductase subunit 5, chloroplastic (ndhF).